A 178-amino-acid chain; its full sequence is ATP synthase subunit delta (178 aa).

The protein belongs to the ATPase delta chain family. In terms of assembly, F-type ATPases have 2 components, F(1) - the catalytic core - and F(0) - the membrane proton channel. F(1) has five subunits: alpha(3), beta(3), gamma(1), delta(1), epsilon(1). F(0) has three main subunits: a(1), b(2) and c(10-14). The alpha and beta chains form an alternating ring which encloses part of the gamma chain. F(1) is attached to F(0) by a central stalk formed by the gamma and epsilon chains, while a peripheral stalk is formed by the delta and b chains.

It is found in the cell inner membrane. Functionally, f(1)F(0) ATP synthase produces ATP from ADP in the presence of a proton or sodium gradient. F-type ATPases consist of two structural domains, F(1) containing the extramembraneous catalytic core and F(0) containing the membrane proton channel, linked together by a central stalk and a peripheral stalk. During catalysis, ATP synthesis in the catalytic domain of F(1) is coupled via a rotary mechanism of the central stalk subunits to proton translocation. In terms of biological role, this protein is part of the stalk that links CF(0) to CF(1). It either transmits conformational changes from CF(0) to CF(1) or is implicated in proton conduction. The polypeptide is ATP synthase subunit delta (Methylobacillus flagellatus (strain ATCC 51484 / DSM 6875 / VKM B-1610 / KT)).